The following is a 181-amino-acid chain: FMN reductase (NADH) RutF (181 aa).

Belongs to the non-flavoprotein flavin reductase family. RutF subfamily.

It carries out the reaction FMNH2 + NAD(+) = FMN + NADH + 2 H(+). In terms of biological role, catalyzes the reduction of FMN to FMNH2 which is used to reduce pyrimidine by RutA via the Rut pathway. The sequence is that of FMN reductase (NADH) RutF from Ancylobacter novellus (strain ATCC 8093 / DSM 506 / JCM 20403 / CCM 1077 / IAM 12100 / NBRC 12443 / NCIMB 10456) (Starkeya novella).